The primary structure comprises 243 residues: Uridylate kinase (243 aa).

12 to 15 contributes to the ATP binding site; the sequence is KLSG. Position 54 (Gly54) interacts with UMP. Gly55 and Arg59 together coordinate ATP. 135–142 serves as a coordination point for UMP; that stretch reads TGNPYFTT. Residues Asn163, Tyr169, and Asp172 each contribute to the ATP site.

The protein belongs to the UMP kinase family. Homohexamer.

It is found in the cytoplasm. It catalyses the reaction UMP + ATP = UDP + ADP. The protein operates within pyrimidine metabolism; CTP biosynthesis via de novo pathway; UDP from UMP (UMPK route): step 1/1. Its activity is regulated as follows. Inhibited by UTP. Functionally, catalyzes the reversible phosphorylation of UMP to UDP. This chain is Uridylate kinase, found in Roseiflexus sp. (strain RS-1).